The chain runs to 70 residues: Turripeptide Gsg9.2 (70 aa).

A signal peptide spans 1–20; sequence MKVYCLLLVLLVGLVSQAHG. The region spanning 21–70 is the Kazal-like domain; it reads QLDKKCQMVCTMDYRPVCGSDGRTYPNKCTLTSTACMSQRSITVFHDGEC. 3 disulfide bridges follow: Cys-26–Cys-56, Cys-30–Cys-49, and Cys-38–Cys-70.

It belongs to the conopeptide P-like superfamily. Expressed by the venom duct.

The protein resides in the secreted. Functionally, acts as a neurotoxin by inhibiting an ion channel. May also act as a serine protease inhibitor, since it possess the kazal serine protease inhibitor signature. In Gemmula sogodensis (Gem-turris), this protein is Turripeptide Gsg9.2.